Consider the following 410-residue polypeptide: L-sorbose 1-phosphate reductase (410 aa).

Zn(2+) contacts are provided by Cys-40, His-69, and Glu-70. NAD(+) contacts are provided by residues Arg-221 and 309–310 (GT).

Belongs to the zinc-containing alcohol dehydrogenase family. Requires Zn(2+) as cofactor.

In terms of biological role, reduces L-sorbose 1-phosphate to D-glucitol 6-phosphate. The sequence is that of L-sorbose 1-phosphate reductase (sorE) from Klebsiella pneumoniae.